The chain runs to 22 residues: Caerin-3.3 (22 aa).

At Lys-22 the chain carries Lysine amide.

In terms of tissue distribution, expressed by the skin parotoid and/or rostral glands.

The protein resides in the secreted. Functionally, antibacterial peptide, that adopts an alpha helical conformation which can disrupt bacterial membranes. Each caerin displays a different antimicrobial specificity. This is Caerin-3.3 from Ranoidea caerulea (Green tree frog).